Reading from the N-terminus, the 207-residue chain is Small ribosomal subunit protein uS10m (207 aa).

The transit peptide at 1–14 directs the protein to the mitochondrion; it reads MNMFRQAVRSFVRY.

This sequence belongs to the universal ribosomal protein uS10 family. In terms of assembly, part of the mitochondrial small ribosomal subunit.

Its subcellular location is the mitochondrion. Its function is as follows. Involved in mitochondrial genome encoded proteins translation. Involved in the binding of tRNA to the ribosomes. The protein is Small ribosomal subunit protein uS10m (RSM10) of Kluyveromyces lactis (strain ATCC 8585 / CBS 2359 / DSM 70799 / NBRC 1267 / NRRL Y-1140 / WM37) (Yeast).